We begin with the raw amino-acid sequence, 237 residues long: tRNA (guanine-N(1)-)-methyltransferase (237 aa).

S-adenosyl-L-methionine is bound by residues G112 and 132-137; that span reads IGDFVL.

It belongs to the RNA methyltransferase TrmD family. As to quaternary structure, homodimer.

The protein resides in the cytoplasm. It carries out the reaction guanosine(37) in tRNA + S-adenosyl-L-methionine = N(1)-methylguanosine(37) in tRNA + S-adenosyl-L-homocysteine + H(+). Its function is as follows. Specifically methylates guanosine-37 in various tRNAs. The polypeptide is tRNA (guanine-N(1)-)-methyltransferase (Thermosynechococcus vestitus (strain NIES-2133 / IAM M-273 / BP-1)).